A 604-amino-acid polypeptide reads, in one-letter code: Pescadillo homolog (604 aa).

Positions 349-448 (PTSTLFSKFI…ELLPVNKYAP (100 aa)) constitute a BRCT domain. Disordered stretches follow at residues 452 to 562 (LPPH…MTNK) and 579 to 604 (TRTQ…LSKK). 2 coiled-coil regions span residues 468–522 (EAEK…LEAA) and 573–604 (GIDK…LSKK). Acidic residues predominate over residues 476 to 510 (ENAEEEEEDEVDEDDEDADEDEEDEEEEDEEEDED). The segment covering 593 to 604 (KTKAQLDKLSKK) has biased composition (basic and acidic residues).

Belongs to the pescadillo family. Component of the NOP7 complex, composed of ERB1, NOP7 and YTM1. The complex is held together by ERB1, which interacts with NOP7 via its N-terminal domain and with YTM1 via a high-affinity interaction between the seven-bladed beta-propeller domains of the 2 proteins. The NOP7 complex associates with the 66S pre-ribosome.

The protein resides in the nucleus. The protein localises to the nucleolus. Its subcellular location is the nucleoplasm. In terms of biological role, component of the NOP7 complex, which is required for maturation of the 25S and 5.8S ribosomal RNAs and formation of the 60S ribosome. This chain is Pescadillo homolog, found in Scheffersomyces stipitis (strain ATCC 58785 / CBS 6054 / NBRC 10063 / NRRL Y-11545) (Yeast).